A 92-amino-acid chain; its full sequence is PqqA binding protein (92 aa).

It belongs to the PqqD family. Monomer. Interacts with PqqE.

Its pathway is cofactor biosynthesis; pyrroloquinoline quinone biosynthesis. Functions as a PqqA binding protein and presents PqqA to PqqE, in the pyrroloquinoline quinone (PQQ) biosynthetic pathway. The protein is PqqA binding protein of Pseudomonas paraeruginosa (strain DSM 24068 / PA7) (Pseudomonas aeruginosa (strain PA7)).